The chain runs to 438 residues: EF-hand calcium-binding domain-containing protein 3 (438 aa).

2 consecutive EF-hand domains span residues S47–N82 and L83–F118. 5 residues coordinate Ca(2+): D96, D98, D100, K102, and D107. The residue at position 279 (Y279) is a Phosphotyrosine. The tract at residues S413 to Q438 is disordered. Residues R426–Q438 show a composition bias toward basic residues.

The protein is EF-hand calcium-binding domain-containing protein 3 (EFCAB3) of Bos taurus (Bovine).